The chain runs to 249 residues: Proteasome activator complex subunit 1 (249 aa).

Residues 59-102 (APLDIPVPDPVKEKEKEERKKQQEKEEKEEKKKGDEDDKGPPCG) are disordered. The span at 68-98 (PVKEKEKEERKKQQEKEEKEEKKKGDEDDKG) shows a compositional bias: basic and acidic residues.

This sequence belongs to the PA28 family. In terms of assembly, heterodimer of PSME1 and PSME2, which forms a hexameric ring. PSME1 can form homoheptamers.

Its function is as follows. Implicated in immunoproteasome assembly and required for efficient antigen processing. The PA28 activator complex enhances the generation of class I binding peptides by altering the cleavage pattern of the proteasome. This chain is Proteasome activator complex subunit 1 (Psme1), found in Mus musculus (Mouse).